The chain runs to 333 residues: MASTKEKLIAHVSKEQPAGPTNKVTVVGVGMVGMAAAVSILLKDLTDELALVDVMEDKLKGEAMDLQHGSLFLKTHKIVADKDYSVTANSKVVVVTAGARQQEGESRLNLVQRNVNIFKFIIPNIIKYSPNCILLVVSNPVDILTYVAWKLSGLPRNRVIGSGTNLDSARFRYLMGEKLGIHPSSCHGWVVGEHGDSSVPVWSGVNVAGVSLQALNPDLGTDKDKEDWKSVHKMVVDSAYEVIKLKGYTSWAIGMSVADLCESILKNMHKCHPVSTLVKGMHGVNEEVFLSVPCILGNNGLTDVVHMTLKPEEEKQLVKSAETLWGVQKELTL.

Residues Gly-30–Lys-58 and Arg-100 each bind NAD(+). Arg-107, Asn-139, and Arg-170 together coordinate substrate. NAD(+) is bound at residue Asn-139. The active-site Proton acceptor is His-194. Substrate is bound at residue Thr-249.

The protein belongs to the LDH/MDH superfamily. LDH family. In terms of assembly, homotetramer.

The protein localises to the cytoplasm. It catalyses the reaction (S)-lactate + NAD(+) = pyruvate + NADH + H(+). The protein operates within fermentation; pyruvate fermentation to lactate; (S)-lactate from pyruvate: step 1/1. Its function is as follows. Interconverts simultaneously and stereospecifically pyruvate and lactate with concomitant interconversion of NADH and NAD(+). This chain is L-lactate dehydrogenase A chain (ldha), found in Danio rerio (Zebrafish).